The chain runs to 453 residues: Kynureninase (453 aa).

Pyridoxal 5'-phosphate is bound by residues Leu114, Thr115, 142-145, Asp232, His235, and Tyr257; that span reads FPSD. Lys258 carries the N6-(pyridoxal phosphate)lysine modification. Trp286 is a binding site for pyridoxal 5'-phosphate.

It belongs to the kynureninase family. Homodimer. Pyridoxal 5'-phosphate is required as a cofactor.

The protein resides in the cytoplasm. The enzyme catalyses L-kynurenine + H2O = anthranilate + L-alanine + H(+). It catalyses the reaction 3-hydroxy-L-kynurenine + H2O = 3-hydroxyanthranilate + L-alanine + H(+). The protein operates within amino-acid degradation; L-kynurenine degradation; L-alanine and anthranilate from L-kynurenine: step 1/1. It participates in cofactor biosynthesis; NAD(+) biosynthesis; quinolinate from L-kynurenine: step 2/3. Catalyzes the cleavage of L-kynurenine (L-Kyn) and L-3-hydroxykynurenine (L-3OHKyn) into anthranilic acid (AA) and 3-hydroxyanthranilic acid (3-OHAA), respectively. The chain is Kynureninase from Cryptococcus neoformans var. neoformans serotype D (strain JEC21 / ATCC MYA-565) (Filobasidiella neoformans).